The following is a 990-amino-acid chain: Aconitate hydratase 3, mitochondrial (990 aa).

The transit peptide at 1–78 directs the protein to the mitochondrion; sequence MYLTASSSAS…PFRFTSQIRA (78 aa). At Ser91 the chain carries Phosphoserine. Substrate contacts are provided by residues Gln182 and 301 to 303; that span reads DSH. [4Fe-4S] cluster contacts are provided by Cys533, Cys599, and Cys602. Residues Arg632, Arg637, Arg795, and 876–877 each bind substrate; that span reads SR.

The protein belongs to the aconitase/IPM isomerase family. Monomer. Interacts with B'GAMMA in the cytosol. [4Fe-4S] cluster serves as cofactor. Phosphorylated at Ser-91 in the cytoplasm; this phosphorylation requires the presence of B'GAMMA. In terms of tissue distribution, major aconitase isoenzyme in young seedlings. Expressed in roots, leaves, stems and flowers, and, at low levels, in seeds.

Its subcellular location is the mitochondrion. It localises to the cytoplasm. It catalyses the reaction citrate = D-threo-isocitrate. It participates in carbohydrate metabolism; tricarboxylic acid cycle; isocitrate from oxaloacetate: step 2/2. Functionally, catalyzes the isomerization of citrate to isocitrate via cis-aconitate. Contributes to oxidative stress tolerance. Modulates cytosolic citrate metabolism during lipid mobilization. Required during seedling growth. In Arabidopsis thaliana (Mouse-ear cress), this protein is Aconitate hydratase 3, mitochondrial.